We begin with the raw amino-acid sequence, 369 residues long: GTPase Obg (369 aa).

The Obg domain maps to 1–159; sequence MKFIDEARIE…RMLKLELKVL (159 aa). The disordered stretch occupies residues 128-147; it reads LHFKSSTNRAPRQKTDGKPG. Residues 160 to 334 form the OBG-type G domain; the sequence is ADVGLLGMPN…LCYAIYDYLA (175 aa). GTP is bound by residues 166 to 173, 191 to 195, 213 to 216, 284 to 287, and 315 to 317; these read GMPNAGKS, FTTLA, DIPG, NKLD, and SAL. Positions 173 and 193 each coordinate Mg(2+).

This sequence belongs to the TRAFAC class OBG-HflX-like GTPase superfamily. OBG GTPase family. In terms of assembly, monomer. It depends on Mg(2+) as a cofactor.

The protein localises to the cytoplasm. Its function is as follows. An essential GTPase which binds GTP, GDP and possibly (p)ppGpp with moderate affinity, with high nucleotide exchange rates and a fairly low GTP hydrolysis rate. Plays a role in control of the cell cycle, stress response, ribosome biogenesis and in those bacteria that undergo differentiation, in morphogenesis control. The chain is GTPase Obg from Burkholderia multivorans (strain ATCC 17616 / 249).